A 102-amino-acid polypeptide reads, in one-letter code: Gastrin/cholecystokinin-like peptide (102 aa).

The N-terminal stretch at 1–20 (MDKKVCVSILLAMLAIAALC) is a signal peptide. The propeptide occupies 21–45 (RPMTELESARHGAQRKNSISDVSRR). Residue Y86 is modified to Sulfotyrosine. At F92 the chain carries Phenylalanine amide. Residues 96 to 102 (SSEVTES) constitute a propeptide that is removed on maturation.

It belongs to the gastrin/cholecystokinin family. In terms of tissue distribution, expressed in antrum, duodenum, colon, pancreas, brain and testis. No expression found in kidney, lung, liver, skin or distal two-thirds of small intestine. In the brain, strongly expressed in the pituitary gland with moderate expression in the neural lobe, brain stem and hypothalamus.

It is found in the secreted. May control digestion processes. This chain is Gastrin/cholecystokinin-like peptide (GAST), found in Aquarana catesbeiana (American bullfrog).